The primary structure comprises 338 residues: Anthranilate phosphoribosyltransferase (338 aa).

5-phospho-alpha-D-ribose 1-diphosphate contacts are provided by residues Gly-81, 84 to 85 (GD), Thr-89, 91 to 94 (NIST), 109 to 117 (KHGNRALSS), and Ala-121. Gly-81 is a binding site for anthranilate. Ser-93 is a binding site for Mg(2+). Asn-112 contacts anthranilate. Position 167 (Arg-167) interacts with anthranilate. Residues Asp-225 and Glu-226 each contribute to the Mg(2+) site.

It belongs to the anthranilate phosphoribosyltransferase family. As to quaternary structure, homodimer. The cofactor is Mg(2+).

The catalysed reaction is N-(5-phospho-beta-D-ribosyl)anthranilate + diphosphate = 5-phospho-alpha-D-ribose 1-diphosphate + anthranilate. Its pathway is amino-acid biosynthesis; L-tryptophan biosynthesis; L-tryptophan from chorismate: step 2/5. In terms of biological role, catalyzes the transfer of the phosphoribosyl group of 5-phosphorylribose-1-pyrophosphate (PRPP) to anthranilate to yield N-(5'-phosphoribosyl)-anthranilate (PRA). The chain is Anthranilate phosphoribosyltransferase from Rhizobium etli (strain ATCC 51251 / DSM 11541 / JCM 21823 / NBRC 15573 / CFN 42).